We begin with the raw amino-acid sequence, 112 residues long: Photosystem II reaction center Psb28 protein (112 aa).

Belongs to the Psb28 family. In terms of assembly, part of the photosystem II complex.

It localises to the cellular thylakoid membrane. This Synechocystis sp. (strain ATCC 27184 / PCC 6803 / Kazusa) protein is Photosystem II reaction center Psb28 protein.